A 551-amino-acid chain; its full sequence is Putative ABC transporter ATP-binding protein BA_3364/GBAA_3364/BAS3118 (551 aa).

ABC transporter domains lie at 5-243 (AEIK…FRPF) and 293-525 (LSAE…SINR). ATP contacts are provided by residues 39-46 (GGSGSGKT) and 327-334 (GKNGTGKS).

This sequence belongs to the ABC transporter superfamily.

The protein localises to the cell membrane. Probably part of an ABC transporter complex. Responsible for energy coupling to the transport system. This chain is Putative ABC transporter ATP-binding protein BA_3364/GBAA_3364/BAS3118, found in Bacillus anthracis.